We begin with the raw amino-acid sequence, 156 residues long: Small ribosomal subunit protein uS7 (156 aa).

The protein belongs to the universal ribosomal protein uS7 family. In terms of assembly, part of the 30S ribosomal subunit. Contacts proteins S9 and S11.

Functionally, one of the primary rRNA binding proteins, it binds directly to 16S rRNA where it nucleates assembly of the head domain of the 30S subunit. Is located at the subunit interface close to the decoding center, probably blocks exit of the E-site tRNA. This chain is Small ribosomal subunit protein uS7, found in Methylococcus capsulatus (strain ATCC 33009 / NCIMB 11132 / Bath).